The sequence spans 189 residues: MQYLIVLALVAAASANVYHDGACPEVKPVDNFDWSNYHGKWWEVAKYPNSVEKYGKCGWAEYTPEGKSVKVSNYHVIHGKEYFIEGTAYPVGDSKIGKIYHKLTYGGVTKENVFNVLSTDNKNYIIGYYCKYDEDKKGHQDFVWVLSRSKVLTGEAKTAVENYLIGSPVVDSQKLVYSDFSEAACKVNN.

The signal sequence occupies residues 1–15; that stretch reads MQYLIVLALVAAASA. 2 disulfide bridges follow: C23–C130 and C57–C185.

It belongs to the calycin superfamily. Lipocalin family. As to quaternary structure, homotetramer. As to expression, hemolymph.

The protein localises to the secreted. This protein binds the blue pigments bilins. The sequence is that of Bilin-binding protein from Pieris brassicae (White butterfly).